The following is a 439-amino-acid chain: GTPase Der (439 aa).

EngA-type G domains are found at residues 4–168 and 177–352; these read PIVA…KDDE and INIA…DNYT. GTP is bound by residues 10–17, 57–61, 120–123, 183–190, 230–234, and 295–298; these read GRPNVGKS, DTGGI, NKID, GKPNVGKS, DTAGL, and NKWD. Residues 353 to 437 enclose the KH-like domain; that stretch reads KRVKTGVLND…GIKLEFRERK (85 aa).

This sequence belongs to the TRAFAC class TrmE-Era-EngA-EngB-Septin-like GTPase superfamily. EngA (Der) GTPase family. In terms of assembly, associates with the 50S ribosomal subunit.

GTPase that plays an essential role in the late steps of ribosome biogenesis. In Clostridium botulinum (strain Kyoto / Type A2), this protein is GTPase Der.